A 94-amino-acid polypeptide reads, in one-letter code: Co-chaperonin GroES (94 aa).

It belongs to the GroES chaperonin family. In terms of assembly, heptamer of 7 subunits arranged in a ring. Interacts with the chaperonin GroEL.

Its subcellular location is the cytoplasm. Together with the chaperonin GroEL, plays an essential role in assisting protein folding. The GroEL-GroES system forms a nano-cage that allows encapsulation of the non-native substrate proteins and provides a physical environment optimized to promote and accelerate protein folding. GroES binds to the apical surface of the GroEL ring, thereby capping the opening of the GroEL channel. The chain is Co-chaperonin GroES from Streptococcus pneumoniae (strain ATCC 700669 / Spain 23F-1).